The following is a 371-amino-acid chain: Peptide chain release factor 2 (371 aa).

Gln253 carries the N5-methylglutamine modification.

The protein belongs to the prokaryotic/mitochondrial release factor family. Post-translationally, methylated by PrmC. Methylation increases the termination efficiency of RF2.

The protein localises to the cytoplasm. Peptide chain release factor 2 directs the termination of translation in response to the peptide chain termination codons UGA and UAA. The chain is Peptide chain release factor 2 (prfB) from Mycobacterium bovis (strain ATCC BAA-935 / AF2122/97).